Consider the following 796-residue polypeptide: ER degradation-enhancing alpha-mannosidase-like protein 1 (796 aa).

The N-terminal stretch at 1-20 (MVCCLWVLLALLLHLDHVAC) is a signal peptide. Asn-86 carries an N-linked (GlcNAc...) asparagine glycan. Glu-372 functions as the Proton donor in the catalytic mechanism. Residue Thr-495 coordinates Ca(2+). N-linked (GlcNAc...) asparagine glycosylation is found at Asn-517, Asn-672, and Asn-762.

It belongs to the glycosyl hydrolase 47 family. As to quaternary structure, interacts with PDI1. Ca(2+) serves as cofactor.

Its subcellular location is the endoplasmic reticulum lumen. The catalysed reaction is Hydrolysis of terminal, non-reducing alpha-D-mannose residues in alpha-D-mannosides.. It functions in the pathway protein modification; protein glycosylation. Functionally, alpha-1,2-specific exomannosidase involved in endoplasmic reticulum-associated degradation (ERAD). Delivers misfolded glycoproteins to proteasomes. Forms a complex with PDI1 to process unfolded protein-bound Man8GlcNAc2 oligosaccharides to Man7GlcNAc2, promoting degradation in unfolded protein response. The sequence is that of ER degradation-enhancing alpha-mannosidase-like protein 1 (MNL1) from Saccharomyces cerevisiae (strain ATCC 204508 / S288c) (Baker's yeast).